A 356-amino-acid chain; its full sequence is N-methyltransferase 4 (356 aa).

S-adenosyl-L-methionine is bound by residues 93-94 (QS), 128-136 (ILDIGCGFG), and 155-160 (TNSAEQ).

It belongs to the CFA/CMAS family. In terms of tissue distribution, expressed in stems, roots, flower buds and leaves.

Probable N-methyltransferase not involved in benzylisoquinoline metabolism. Shows no detectable activity with (s)-coclaurine, (R)- or (S)-reticuline, papaverine or (R,S)-tetrahydropapaverine. This Papaver somniferum (Opium poppy) protein is N-methyltransferase 4 (NMT4).